Here is a 278-residue protein sequence, read N- to C-terminus: HTH-type transcriptional activator RhaS (278 aa).

Residues 174–272 (NLLLAWLEDH…NWSPRDIRQG (99 aa)) form the HTH araC/xylS-type domain. 2 DNA-binding regions (H-T-H motif) span residues 191–212 (DAVA…KQQT) and 239–262 (VTDI…RREF).

As to quaternary structure, binds DNA as a dimer.

Its subcellular location is the cytoplasm. Functionally, activates expression of the rhaBAD and rhaT operons. The protein is HTH-type transcriptional activator RhaS of Escherichia coli O127:H6 (strain E2348/69 / EPEC).